The chain runs to 103 residues: Large ribosomal subunit protein eL14 (103 aa).

Belongs to the eukaryotic ribosomal protein eL14 family.

This Pyrobaculum aerophilum (strain ATCC 51768 / DSM 7523 / JCM 9630 / CIP 104966 / NBRC 100827 / IM2) protein is Large ribosomal subunit protein eL14.